The chain runs to 90 residues: Small ribosomal subunit protein bS20 (90 aa).

This sequence belongs to the bacterial ribosomal protein bS20 family.

Its function is as follows. Binds directly to 16S ribosomal RNA. In Mesomycoplasma hyopneumoniae (strain J / ATCC 25934 / NCTC 10110) (Mycoplasma hyopneumoniae), this protein is Small ribosomal subunit protein bS20.